The following is a 390-amino-acid chain: L-seryl-tRNA(Sec) selenium transferase (390 aa).

At lysine 225 the chain carries N6-(pyridoxal phosphate)lysine.

This sequence belongs to the SelA family. Pyridoxal 5'-phosphate is required as a cofactor.

The protein localises to the cytoplasm. It carries out the reaction L-seryl-tRNA(Sec) + selenophosphate + H(+) = L-selenocysteinyl-tRNA(Sec) + phosphate. It functions in the pathway aminoacyl-tRNA biosynthesis; selenocysteinyl-tRNA(Sec) biosynthesis; selenocysteinyl-tRNA(Sec) from L-seryl-tRNA(Sec) (bacterial route): step 1/1. Converts seryl-tRNA(Sec) to selenocysteinyl-tRNA(Sec) required for selenoprotein biosynthesis. The chain is L-seryl-tRNA(Sec) selenium transferase from Helicobacter pylori (strain J99 / ATCC 700824) (Campylobacter pylori J99).